We begin with the raw amino-acid sequence, 442 residues long: Septin-8 (442 aa).

Ala-2 carries the post-translational modification N-acetylalanine. Ser-10 carries the post-translational modification Phosphoserine. The 267-residue stretch at Gln-41–Glu-307 folds into the Septin-type G domain. Residues Gly-51–Ser-58 form a G1 motif region. GTP contacts are provided by residues Gly-51–Ser-58, Gly-106, Lys-187–Glu-195, Gly-241, and Arg-256. The tract at residues Asp-103 to Gly-106 is G3 motif. A G4 motif region spans residues Ala-186–Asp-189. Residues Leu-322 to Ser-410 are a coiled coil. The span at His-377–Leu-391 shows a compositional bias: basic and acidic residues. The disordered stretch occupies residues His-377–Pro-442. 2 stretches are compositionally biased toward polar residues: residues Leu-408–Pro-420 and Gly-432–Pro-442.

The protein belongs to the TRAFAC class TrmE-Era-EngA-EngB-Septin-like GTPase superfamily. Septin GTPase family. In terms of assembly, septins polymerize into heterooligomeric protein complexes that form filaments, and can associate with cellular membranes, actin filaments and microtubules. GTPase activity is required for filament formation. Interacts with CDK14, SEPTIN4, SEPTIN5 and SEPTIN7. Interacts with VAMP2; the interaction inhibits interaction of VAMP2 with SYP. Interacts with STX1A.

The protein resides in the cytoplasm. Its subcellular location is the cytoskeleton. It localises to the synapse. It is found in the cell projection. The protein localises to the axon. The protein resides in the cytoplasmic vesicle. Its subcellular location is the secretory vesicle. It localises to the synaptic vesicle membrane. It is found in the presynapse. Filament-forming cytoskeletal GTPase. May play a role in platelet secretion. Seems to participate in the process of SNARE complex formation in synaptic vesicles. The sequence is that of Septin-8 from Callithrix jacchus (White-tufted-ear marmoset).